A 34-amino-acid polypeptide reads, in one-letter code: Omega-ctenitoxin-Pn2a (34 aa).

3 disulfide bridges follow: Cys-2–Cys-16, Cys-9–Cys-26, and Cys-15–Cys-28.

The protein belongs to the neurotoxin 02 (plectoxin) family. 01 (Tx3) subfamily. As to expression, expressed by the venom gland.

It is found in the secreted. Its function is as follows. Inhibits all known high-voltage activated calcium channels (L-, P/Q- and R-type currents) (Cav), and most effectively the P/Q- (Cav2.1/CACNA1A) and R-type (Cav2.3/CACNA1E) currents. In rat brain, inhibits glutamate release, neuronal death and loss of neurotransmission in the hippocampus resulting from ischemia. In vivo, induces rapid general flaccid paralysis followed by death in 10-30 minutes at dose levels of 5 ug per mouse. This is Omega-ctenitoxin-Pn2a from Phoneutria nigriventer (Brazilian armed spider).